A 130-amino-acid chain; its full sequence is Phosphoribosyl-AMP cyclohydrolase (130 aa).

Mg(2+) is bound at residue Asp-77. Cys-78 provides a ligand contact to Zn(2+). Mg(2+) contacts are provided by Asp-79 and Asp-81. Positions 95 and 102 each coordinate Zn(2+).

This sequence belongs to the PRA-CH family. As to quaternary structure, homodimer. The cofactor is Mg(2+). It depends on Zn(2+) as a cofactor.

It localises to the cytoplasm. The catalysed reaction is 1-(5-phospho-beta-D-ribosyl)-5'-AMP + H2O = 1-(5-phospho-beta-D-ribosyl)-5-[(5-phospho-beta-D-ribosylamino)methylideneamino]imidazole-4-carboxamide. It participates in amino-acid biosynthesis; L-histidine biosynthesis; L-histidine from 5-phospho-alpha-D-ribose 1-diphosphate: step 3/9. Functionally, catalyzes the hydrolysis of the adenine ring of phosphoribosyl-AMP. The chain is Phosphoribosyl-AMP cyclohydrolase from Pseudomonas syringae pv. tomato (strain ATCC BAA-871 / DC3000).